We begin with the raw amino-acid sequence, 829 residues long: G-type lectin S-receptor-like serine/threonine-protein kinase At1g34300 (829 aa).

Positions 1-25 are cleaved as a signal peptide; sequence MAVKTPFLKLLPLLLLLLHFPFSFS. Bulb-type lectin domains are found at residues 26–140 and 143–260; these read TIPL…SSFD and TDTI…PVNA. The Extracellular portion of the chain corresponds to 26 to 421; that stretch reads TIPLGSVIYA…KGDDNNSKVH (396 aa). Asn-46, Asn-98, Asn-130, Asn-151, Asn-172, Asn-178, Asn-189, and Asn-195 each carry an N-linked (GlcNAc...) asparagine glycan. In terms of domain architecture, EGF-like spans 264-301; it reads AVDQCLVYGYCGNFGICSYNDTNPICSCPSRNFDFVDV. 5 disulfide bridges follow: Cys-268-Cys-280, Cys-274-Cys-289, Cys-317-Cys-399, Cys-350-Cys-373, and Cys-354-Cys-360. Residues Asn-283 and Asn-320 are each glycosylated (N-linked (GlcNAc...) asparagine). Residues 317–399 enclose the Apple domain; sequence CSGNTTMLDL…VPSTSYVKVC (83 aa). Asn-416 is a glycosylation site (N-linked (GlcNAc...) asparagine). The helical transmembrane segment at 422–442 threads the bilayer; it reads LWIVAVAVIAGLLGLVAVEIG. Topologically, residues 443 to 829 are cytoplasmic; the sequence is LWWCCCRKNP…RISEGSMLGS (387 aa). The Protein kinase domain occupies 484–759; that stretch reads KSFKEKLGAG…GKVVQMLEGI (276 aa). ATP contacts are provided by residues 490–498 and Lys-512; that span reads LGAGGFGTV. At Ser-532 the chain carries Phosphoserine. Residues 572–589 form a caM-binding region; it reads DSAKFLTWEYRFNIALGT. Asp-608 serves as the catalytic Proton acceptor. Ser-625 and Ser-799 each carry phosphoserine.

It belongs to the protein kinase superfamily. Ser/Thr protein kinase family.

Its subcellular location is the cell membrane. It catalyses the reaction L-seryl-[protein] + ATP = O-phospho-L-seryl-[protein] + ADP + H(+). The catalysed reaction is L-threonyl-[protein] + ATP = O-phospho-L-threonyl-[protein] + ADP + H(+). The polypeptide is G-type lectin S-receptor-like serine/threonine-protein kinase At1g34300 (Arabidopsis thaliana (Mouse-ear cress)).